The sequence spans 275 residues: Collectin-10 (275 aa).

Positions 1-25 (MKYGKLWPIGVSVLGVIALHVRVLS) are cleaved as a signal peptide. A glycan (N-linked (GlcNAc...) asparagine) is linked at Asn-30. The segment at 39–76 (THTILPGPKGDDGEAGDTGVLGKLGKDGPKGQKGNKGI) is disordered. The Collagen-like domain occupies 51–110 (GEAGDTGVLGKLGKDGPKGQKGNKGIIGDSGDLGLIGKIGPIGSKGDKGHKGLPGLPGGK). Positions 153 to 269 (TDEKYYYIVR…CSLTIYFVCE (117 aa)) constitute a C-type lectin domain. Cystine bridges form between Cys-174–Cys-268 and Cys-246–Cys-260.

The protein belongs to the COLEC10/COLEC11 family.

The protein localises to the secreted. Functionally, lectin that binds to various sugars: galactose &gt; mannose = fucose &gt; N-acetylglucosamine &gt; N-acetylgalactosamine. This chain is Collectin-10 (colec10), found in Xenopus tropicalis (Western clawed frog).